Reading from the N-terminus, the 162-residue chain is Type IV major fimbrial protein FimA (162 aa).

A propeptide spans 1 to 7 (MKSLQKG) (leader sequence). Phenylalanine 8 is subject to N-methylphenylalanine. A helical transmembrane segment spans residues 8-28 (FTLIELMIVVAIIGILAAFAI). Cysteines 63 and 106 form a disulfide.

This sequence belongs to the N-Me-Phe pilin family.

It localises to the fimbrium. The protein localises to the membrane. Its function is as follows. Major component of the type IV fimbriae that plays an essential role in twitching motility, natural transformation, and protease secretion. In Dichelobacter nodosus (strain VCS1703A), this protein is Type IV major fimbrial protein FimA (fimA).